The following is a 325-amino-acid chain: Heat-inducible transcription repressor HrcA (325 aa).

This sequence belongs to the HrcA family.

Its function is as follows. Negative regulator of class I heat shock genes (grpE-dnaK-dnaJ and groELS operons). Prevents heat-shock induction of these operons. This Staphylococcus aureus (strain JH1) protein is Heat-inducible transcription repressor HrcA.